The following is a 406-amino-acid chain: Cysteine desulfurase (406 aa).

Position 226 is an N6-(pyridoxal phosphate)lysine (Lys226). Residue Cys364 is the Cysteine persulfide intermediate of the active site.

This sequence belongs to the class-V pyridoxal-phosphate-dependent aminotransferase family. Csd subfamily. Homodimer. Interacts with SufE and the SufBCD complex composed of SufB, SufC and SufD. The interaction with SufE is required to mediate the direct transfer of the sulfur atom from the S-sulfanylcysteine. Pyridoxal 5'-phosphate serves as cofactor.

The protein resides in the cytoplasm. It catalyses the reaction (sulfur carrier)-H + L-cysteine = (sulfur carrier)-SH + L-alanine. It carries out the reaction L-selenocysteine + AH2 = hydrogenselenide + L-alanine + A + H(+). It functions in the pathway cofactor biosynthesis; iron-sulfur cluster biosynthesis. Functionally, cysteine desulfurases mobilize the sulfur from L-cysteine to yield L-alanine, an essential step in sulfur metabolism for biosynthesis of a variety of sulfur-containing biomolecules. Component of the suf operon, which is activated and required under specific conditions such as oxidative stress and iron limitation. Acts as a potent selenocysteine lyase in vitro, that mobilizes selenium from L-selenocysteine. Selenocysteine lyase activity is however unsure in vivo. This is Cysteine desulfurase from Yersinia pestis bv. Antiqua (strain Angola).